Here is a 261-residue protein sequence, read N- to C-terminus: Kallikrein 1-related peptidase b5 (261 aa).

Residues 1 to 18 (MWFLILFLALSLGGIDAA) form the signal peptide. Positions 19–24 (PPVQSR) are cleaved as a propeptide — activation peptide. Positions 25 to 258 (IFGGFNCEKN…FNSWIKDTIA (234 aa)) constitute a Peptidase S1 domain. Disulfide bonds link cysteine 31–cysteine 173, cysteine 50–cysteine 66, cysteine 152–cysteine 219, cysteine 184–cysteine 198, and cysteine 209–cysteine 234. Histidine 65 (charge relay system) is an active-site residue. The N-linked (GlcNAc...) asparagine glycan is linked to asparagine 102. Residue aspartate 120 is the Charge relay system of the active site. Catalysis depends on serine 213, which acts as the Charge relay system.

This sequence belongs to the peptidase S1 family. Kallikrein subfamily.

It catalyses the reaction Preferential cleavage of Arg-|-Xaa bonds in small molecule substrates. Highly selective action to release kallidin (lysyl-bradykinin) from kininogen involves hydrolysis of Met-|-Xaa or Leu-|-Xaa.. In terms of biological role, glandular kallikreins cleave Met-Lys and Arg-Ser bonds in kininogen to release Lys-bradykinin. The polypeptide is Kallikrein 1-related peptidase b5 (Klk1b5) (Mus musculus (Mouse)).